We begin with the raw amino-acid sequence, 386 residues long: Galactokinase (386 aa).

Residue 35–38 participates in substrate binding; the sequence is EHTD. ATP-binding positions include serine 69 and 125–131; that span reads GAGLSSS. Residues serine 131 and glutamate 163 each coordinate Mg(2+). The Proton acceptor role is filled by aspartate 175. Residue tyrosine 224 coordinates substrate.

It belongs to the GHMP kinase family. GalK subfamily.

It localises to the cytoplasm. The catalysed reaction is alpha-D-galactose + ATP = alpha-D-galactose 1-phosphate + ADP + H(+). The protein operates within carbohydrate metabolism; galactose metabolism. Functionally, catalyzes the transfer of the gamma-phosphate of ATP to D-galactose to form alpha-D-galactose-1-phosphate (Gal-1-P). This chain is Galactokinase, found in Vibrio vulnificus (strain YJ016).